A 290-amino-acid chain; its full sequence is Small ribosomal subunit protein uS2 (290 aa).

Belongs to the universal ribosomal protein uS2 family. In terms of assembly, component of the small ribosomal subunit. Mature ribosomes consist of a small (40S) and a large (60S) subunit. The 40S subunit contains about 33 different proteins and 1 molecule of RNA (18S). The 60S subunit contains about 49 different proteins and 3 molecules of RNA (28S, 5.8S and 5S). Interacts with ribosomal protein S21.

The protein resides in the cytoplasm. Its function is as follows. Required for the assembly and/or stability of the 40S ribosomal subunit. Required for the processing of the 20S rRNA-precursor to mature 18S rRNA in a late step of the maturation of 40S ribosomal subunits. This chain is Small ribosomal subunit protein uS2, found in Culex quinquefasciatus (Southern house mosquito).